We begin with the raw amino-acid sequence, 478 residues long: Sphingomyelin synthase-related protein 1 (478 aa).

Positions 1 to 22 are enriched in low complexity; sequence MPAGSRAGSRLRSGSLPRPSRL. Positions 1 to 65 are disordered; sequence MPAGSRAGSR…TAEEVEKEMA (65 aa). An SAM domain is found at 75-141; that stretch reads WTTKHVAVWL…MLSVRKLQKI (67 aa). A run of 6 helical transmembrane segments spans residues 216-236, 264-284, 295-315, 341-361, 385-405, and 410-430; these read ILSC…MVIV, FSMT…VLLL, LCSL…VTSL, AIWS…DYMF, FLHT…LAAH, and IDVF…HTLA. The Cytoplasmic segment spans residues 431-478; sequence NTRAYHQSRRARIWFPMFSFFECNVNGTVPNEYCWPFSKPAIMKRLIG.

This sequence belongs to the sphingomyelin synthase family. Expressed ubiquitously with highest levels in macrophages and testis.

The protein localises to the endoplasmic reticulum membrane. It catalyses the reaction an N-acylsphing-4-enine + a 1,2-diacyl-sn-glycero-3-phosphoethanolamine = an N-acylsphing-4-enine 1-phosphoethanolamine + a 1,2-diacyl-sn-glycerol. The catalysed reaction is an N-acylsphinganine + a 1,2-diacyl-sn-glycero-3-phosphoethanolamine = an N-acylsphinganine-1-phosphoethanolamine + a 1,2-diacyl-sn-glycerol. The enzyme catalyses an N-acyl-(4R)-4-hydroxysphinganine + a 1,2-diacyl-sn-glycero-3-phosphoethanolamine = an N-acyl-(4R)-4-hydroxysphinganine-1-phosphoethanolamine + a 1,2-diacyl-sn-glycerol. It carries out the reaction N-hexadecanoylsphinganine + a 1,2-diacyl-sn-glycero-3-phosphoethanolamine = N-hexadecanoyl-sphinganine-1-phosphoethanolamine + a 1,2-diacyl-sn-glycerol. It catalyses the reaction N-hexadecanoyl-(4R)-hydroxysphinganine + a 1,2-diacyl-sn-glycero-3-phosphoethanolamine = N-hexadecanoyl-(4R)-hydroxysphinganine-1-phosphoethanolamine + a 1,2-diacyl-sn-glycerol. The protein operates within sphingolipid metabolism. Functionally, synthesizes sphingolipids through transfer of a phosphatidyl head group from a glycerophospholipid on to the primary hydroxyl of a ceramide in the lumen of the endoplasmic reticulum. Catalyzes the synthesis of ceramide phosphoethanolamines (CPEs) (such as N-acylsphing-4-enine 1-phosphoethanolamine) by transferring phosphoethanolamine head group, which is smaller and more hydrophilic than the phosphocholine (PC) headgroup transferred in the canonical sphingomyelin synthesis (SMS) reaction by SMS1 or SMS2, from a phosphatidylethanolamine (1,2-diacyl-sn-glycero-3-phosphoethanolamine, PE) to a ceramide (such as N-acylsphing-4-enine). The larger PC prevents an efficient fit in the enzyme's catalytic pocket, leading to little or no SMS activity. In vitro, in the absence of ceramide, it has PLC activity with preference for phosphatidylinositol and phosphatidic acid, but also hydrolyzes phosphatidylethanolamine. This is Sphingomyelin synthase-related protein 1 from Mus musculus (Mouse).